A 460-amino-acid polypeptide reads, in one-letter code: GTPase Der (460 aa).

2 EngA-type G domains span residues 2–166 and 175–353; these read KTIA…AEER and TRIA…QERK. GTP is bound by residues 8-15, 55-59, 118-121, 181-188, 228-232, and 293-296; these read GRPNVGKS, DTGGL, NKLD, GQPNAGKS, DTAGL, and NKID. A KH-like domain is found at 354–446; it reads KRIPTHRLTQ…LLWKWRKAEG (93 aa).

The protein belongs to the TRAFAC class TrmE-Era-EngA-EngB-Septin-like GTPase superfamily. EngA (Der) GTPase family. In terms of assembly, associates with the 50S ribosomal subunit.

GTPase that plays an essential role in the late steps of ribosome biogenesis. This Methylacidiphilum infernorum (isolate V4) (Methylokorus infernorum (strain V4)) protein is GTPase Der.